Reading from the N-terminus, the 432-residue chain is Glutamate-1-semialdehyde 2,1-aminomutase (432 aa).

Lys-271 carries the post-translational modification N6-(pyridoxal phosphate)lysine.

It belongs to the class-III pyridoxal-phosphate-dependent aminotransferase family. HemL subfamily. As to quaternary structure, homodimer. It depends on pyridoxal 5'-phosphate as a cofactor.

Its subcellular location is the cytoplasm. It carries out the reaction (S)-4-amino-5-oxopentanoate = 5-aminolevulinate. It functions in the pathway porphyrin-containing compound metabolism; protoporphyrin-IX biosynthesis; 5-aminolevulinate from L-glutamyl-tRNA(Glu): step 2/2. Its pathway is porphyrin-containing compound metabolism; chlorophyll biosynthesis. The sequence is that of Glutamate-1-semialdehyde 2,1-aminomutase from Prochlorococcus marinus (strain NATL2A).